The chain runs to 528 residues: Phosphoenolpyruvate carboxykinase (ATP) (528 aa).

Substrate-binding residues include Arg-56, Tyr-192, and Lys-198. ATP contacts are provided by residues Lys-198, His-217, and 233-241 (GLSGTGKTT). The Mn(2+) site is built by Lys-198 and His-217. Position 254 (Asp-254) interacts with Mn(2+). ATP contacts are provided by Glu-282, Arg-319, and Thr-444. Residue Arg-319 coordinates substrate.

Belongs to the phosphoenolpyruvate carboxykinase (ATP) family. Mn(2+) serves as cofactor.

It is found in the cytoplasm. The catalysed reaction is oxaloacetate + ATP = phosphoenolpyruvate + ADP + CO2. Its pathway is carbohydrate biosynthesis; gluconeogenesis. Its function is as follows. Involved in the gluconeogenesis. Catalyzes the conversion of oxaloacetate (OAA) to phosphoenolpyruvate (PEP) through direct phosphoryl transfer between the nucleoside triphosphate and OAA. This is Phosphoenolpyruvate carboxykinase (ATP) from Bacillus mycoides (strain KBAB4) (Bacillus weihenstephanensis).